The following is a 396-amino-acid chain: Elongation factor Tu (396 aa).

One can recognise a tr-type G domain in the interval 10–206; the sequence is KPHVNVGTIG…VLDTYIPEPE (197 aa). The segment at 19 to 26 is G1; it reads GHVDHGKT. 19 to 26 provides a ligand contact to GTP; the sequence is GHVDHGKT. Thr-26 provides a ligand contact to Mg(2+). The tract at residues 60-64 is G2; it reads GITIN. The tract at residues 81-84 is G3; that stretch reads DCPG. GTP is bound by residues 81 to 85 and 136 to 139; these read DCPGH and NKCD. The tract at residues 136–139 is G4; that stretch reads NKCD. The interval 174 to 176 is G5; the sequence is SAT.

Belongs to the TRAFAC class translation factor GTPase superfamily. Classic translation factor GTPase family. EF-Tu/EF-1A subfamily. Monomer.

It localises to the cytoplasm. It catalyses the reaction GTP + H2O = GDP + phosphate + H(+). In terms of biological role, GTP hydrolase that promotes the GTP-dependent binding of aminoacyl-tRNA to the A-site of ribosomes during protein biosynthesis. The sequence is that of Elongation factor Tu from Psychrobacter arcticus (strain DSM 17307 / VKM B-2377 / 273-4).